A 57-amino-acid polypeptide reads, in one-letter code: Sperm protamine P1-type (57 aa).

The tract at residues 1–57 (MARYRHNRSRSRSRHRRRRRGHRGGRYRRRRRRGRYGHRRHHRGHSRRRRKRRRSRH) is disordered.

It belongs to the protamine P1 family. In terms of tissue distribution, testis.

It localises to the nucleus. Its subcellular location is the chromosome. Its function is as follows. Protamines substitute for histones in the chromatin of sperm during the haploid phase of spermatogenesis. They compact sperm DNA into a highly condensed, stable and inactive complex. The chain is Sperm protamine P1-type from Alligator mississippiensis (American alligator).